We begin with the raw amino-acid sequence, 196 residues long: Molybdenum cofactor guanylyltransferase (196 aa).

Residues 10-12 (LAG), Lys23, Asn51, Asp69, and Asp99 each bind GTP. Asp99 is a binding site for Mg(2+).

It belongs to the MobA family. In terms of assembly, monomer. Requires Mg(2+) as cofactor.

Its subcellular location is the cytoplasm. It carries out the reaction Mo-molybdopterin + GTP + H(+) = Mo-molybdopterin guanine dinucleotide + diphosphate. Functionally, transfers a GMP moiety from GTP to Mo-molybdopterin (Mo-MPT) cofactor (Moco or molybdenum cofactor) to form Mo-molybdopterin guanine dinucleotide (Mo-MGD) cofactor. This Shewanella baltica (strain OS155 / ATCC BAA-1091) protein is Molybdenum cofactor guanylyltransferase.